A 117-amino-acid polypeptide reads, in one-letter code: Small ribosomal subunit protein eS25 (117 aa).

The tract at residues 1–34 (MPPKKDPKGGKAPPSKKKEGSGGGKAKKKKWSKG) is disordered. Residues 25–34 (KAKKKKWSKG) are compositionally biased toward basic residues.

The protein belongs to the eukaryotic ribosomal protein eS25 family.

This chain is Small ribosomal subunit protein eS25 (rps-25), found in Caenorhabditis elegans.